The primary structure comprises 77 residues: Acyl carrier protein (77 aa).

In terms of domain architecture, Carrier spans 1 to 76 (MSLEDDVKAI…DVIKYIQEHQ (76 aa)). Ser36 is modified (O-(pantetheine 4'-phosphoryl)serine).

It belongs to the acyl carrier protein (ACP) family. In terms of processing, 4'-phosphopantetheine is transferred from CoA to a specific serine of apo-ACP by AcpS. This modification is essential for activity because fatty acids are bound in thioester linkage to the sulfhydryl of the prosthetic group.

Its subcellular location is the cytoplasm. It functions in the pathway lipid metabolism; fatty acid biosynthesis. Functionally, carrier of the growing fatty acid chain in fatty acid biosynthesis. The protein is Acyl carrier protein of Chlamydia trachomatis serovar L2 (strain ATCC VR-902B / DSM 19102 / 434/Bu).